The chain runs to 405 residues: Serine/threonine-protein kinase 2 (405 aa).

The 352-residue stretch at 54-405 (NDDFYHISTG…IFSDWINGGN (352 aa)) folds into the Protein kinase domain. Residues 60–68 (ISTGGYGIV) and lysine 84 each bind ATP. The active-site Proton acceptor is the aspartate 274.

The protein belongs to the protein kinase superfamily. Ser/Thr protein kinase family. Poxviruses subfamily. Post-translationally, phosphorylated in vivo. Autophosphorylated in vitro.

It is found in the host endoplasmic reticulum. The protein resides in the host endoplasmic reticulum-Golgi intermediate compartment. The catalysed reaction is L-seryl-[protein] + ATP = O-phospho-L-seryl-[protein] + ADP + H(+). The enzyme catalyses L-threonyl-[protein] + ATP = O-phospho-L-threonyl-[protein] + ADP + H(+). In terms of biological role, essential serine-protein kinase involved in the early stage of virion morphogenesis. The chain is Serine/threonine-protein kinase 2 (OPG054) from Vaccinia virus (strain L-IVP) (VACV).